The following is a 799-amino-acid chain: MANILKKLYNTDKRELKKFEKYATKVEEHADEMSKLSDEQLQAKTPEFRERIKNGESLDDLLPEAFAVAREGAKRVLGLYPFHVQILGGIALHFGNIAEMMTGEGKTLTATMPVYLNALEGKGVHVVTVNEYLSSRDEEEMGQLYRWLGLTVGLNINSMSPDEKREAYNCDVTYSTNSELGFDYLRDNMVVYKEQMVQRPLNYAIIDEVDSILIDEARTPLIISGEAEQANSDYIRADRFVKTLTEDKSDDDADDDEDHGDYKIDWPTKTISLTRTGIEKACEHFGLKNLYDVENQKLVHHIDQALRANYIMLKDIDYVVQDGEVLIVDSFTGRVMEGRRYSDGLHQAIEAKEGVKIQEESRTQATITYQNFFRMYKKLSGMTGTGKTEEEEFREIYNMQVITIPTNRPIARKDMPDILYPTLDSKFHAVIEEIKKRHAKGQPVLVGTVAIESSERLSHLLDEANIPHAVLNAKNHAKEAQIIMNAGQRGAVTIATNMAGRGTDIKLGPGVKELGGLAVIGTERHESRRIDNQLRGRSGRQGDPGYTRFYLSLEDDLMKRFGGDRVKDFLDRLSDNDDEKVIESRLITRQVESAQKRVEGNNYDTRKQTLQYDDVMRIQREIIYGERMQVIEADKSLKNVLIPMIHRTINSQVDMFTQGDRSQWRLDSLRDFISSSLASEQVTDSIDFKTISVEDLKKKLYDIVEKNFEDKEKALGDPSQMLEFEKVVILRVVDDRWTDHIDAMDQLRQSIGLRGYGQLNPLVEYQDSGYRMFEEMISNIEFDVTRLFMKAEIRQNLSR.

Residues glutamine 85, 103 to 107 (GEGKT), and aspartate 504 contribute to the ATP site.

Belongs to the SecA family. As to quaternary structure, monomer and homodimer. Part of the essential Sec protein translocation apparatus which comprises SecA, SecYEG and auxiliary proteins SecDF. Other proteins may also be involved.

Its subcellular location is the cell membrane. It is found in the cytoplasm. It carries out the reaction ATP + H2O + cellular proteinSide 1 = ADP + phosphate + cellular proteinSide 2.. Its function is as follows. Part of the Sec protein translocase complex. Interacts with the SecYEG preprotein conducting channel. Has a central role in coupling the hydrolysis of ATP to the transfer of proteins into and across the cell membrane, serving as an ATP-driven molecular motor driving the stepwise translocation of polypeptide chains across the membrane. This is Protein translocase subunit SecA from Lactobacillus acidophilus (strain ATCC 700396 / NCK56 / N2 / NCFM).